A 464-amino-acid chain; its full sequence is GTPase Der (464 aa).

EngA-type G domains are found at residues 5–169 (PTIA…KQKG) and 190–368 (IKVA…RESH). GTP-binding positions include 11 to 18 (GRPNVGKS), 58 to 62 (DTGGI), 121 to 124 (NKAD), 196 to 203 (GRPNAGKS), 243 to 247 (DTAGM), and 308 to 311 (NKFD). The 93-residue stretch at 369 to 461 (NLPTTGQLNR…PVIFSARSRV (93 aa)) folds into the KH-like domain.

It belongs to the TRAFAC class TrmE-Era-EngA-EngB-Septin-like GTPase superfamily. EngA (Der) GTPase family. In terms of assembly, associates with the 50S ribosomal subunit.

In terms of biological role, GTPase that plays an essential role in the late steps of ribosome biogenesis. The chain is GTPase Der from Akkermansia muciniphila (strain ATCC BAA-835 / DSM 22959 / JCM 33894 / BCRC 81048 / CCUG 64013 / CIP 107961 / Muc).